We begin with the raw amino-acid sequence, 1155 residues long: MNKNIFITLLISSLLLLSGCTGDTCIDPDDFGFIKFNVSSRYNPEEITSRQEGDQVAPWRDSAYKVNGYPLTVMVRPWSYILGDKNTSGQLSAWCPWYGQKNNTTTLAAFCVKLQPCTFWDNARLDMCTPNPANQNDAMISNPPCIMTDGVGLYFLIAAKNTDPNISPDSQRKPQGITQHLGELTSSVGYEFYSISSTGQFLPAGGINYQYKGEDKSKYAQSPLYFKIIDKFYDDNSGQYRLVIKSGVTDTRPDPLQFLTDLIKGVLFGKDGIIKKTYQQIIDTPGYRMSVSAILTLYIMFTGFSFLIGNINLTHVELIVRILKVSIVSILLSTDKAWTFFHDYLFVFFIDGVQQILQIINEAAATGPGSQSLLGLLISPQTLSKLFSLLFVDWLGFIYIILYLIALYFIFFLIFKATIIYLTALITIGMIIIMGPIFICFMLFNITRSLFENWLRQLISYALQPIILFAGIAFISMIIRTEIYSTLGFGVCKHDFPNLGPINEIFGSFLEDIDPSLGNSIFYWWFPVPMKGGINNFHKAKILVPEDHIIVDDSCKNDPDKCKHCAAYECIDERYIELPFLDLVKDAKRISNFINGKFVQLDGILLIFVSIYLLSKFNDTAISTAQFIAGTSGNLTDIQKVNQQSYESAAKQMNRPLSYVAKTVSVPVTTRVSAKLEETSMFFAKGFEDIMMGRLEKQALGSSANKAVQNEVKRKYGIDSKDVKMNAITDYENGISGLLKNLPKGNELKAKELSQMKFTQLRDKIAANKYGVKDYAALSEEQKRELDKSLKDANLRELASDANFTKDYQDAYKYAHQEMSGRGVGLFGKNIKPLRSWQEMEHRVDTKRKLKEERRVGIGEKLYAGYTGIKRGALTAIVGKDLRDAYEGNLTSAEWHDFEYNDPRLRTYSEKLKDDEKAREREELQMHINKETLAAQADILSPEYLARLEKAGRQSDVEYYQELAQRKLIHEVRGRLFEEGEPVMMGDRFMREKATDSQMRDMIDNAHRKHAEFIEGDRYTRRQEHYDIMHEKAEGNLEQTYKELKDHFKRDDINIEEMPALIAQKIKDTEQGPEVDAKITEELNNFNADVKNYEYSTEVLNKIEDRKQAITDEVNAQIDQINKYRENAKMEKYVRPIVNEGRKLRKLEDHLRGMK.

An N-terminal signal peptide occupies residues 1–19 (MNKNIFITLLISSLLLLSG). C20 carries the N-palmitoyl cysteine lipid modification. C20 carries S-diacylglycerol cysteine lipidation. The next 4 membrane-spanning stretches (helical) occupy residues 291–311 (VSAI…IGNI), 395–415 (LGFI…FLIF), 424–444 (ALIT…FMLF), and 459–479 (ISYA…SMII).

The protein belongs to the TrbL/VirB6 family.

The protein resides in the cell membrane. This is an uncharacterized protein from Rickettsia felis (strain ATCC VR-1525 / URRWXCal2) (Rickettsia azadi).